The sequence spans 276 residues: Radial spoke head protein 9 homolog (276 aa).

Belongs to the flagellar radial spoke RSP9 family. In terms of assembly, component of the axonemal radial spoke 1 (RS1) and 2 (RS2) complexes, at least composed of spoke head proteins RSPH1, RSPH3, RSPH9 and the cilia-specific component RSPH4A or sperm-specific component RSPH6A, spoke stalk proteins RSPH14, DNAJB13, DYDC1, ROPN1L and NME5, and the RS1 complex-specific anchor protein IQUB. Interacts with IQUB. Interacts with RSPH3B. Interacts with RSPH4A. Interacts with RSPH6A. Interacts with CFAP61. Interacts with LRRC23. In terms of tissue distribution, expressed in the testis, trachea, lung, oviduct and ependymal cells (at protein level).

The protein resides in the cytoplasm. Its subcellular location is the cytoskeleton. It is found in the cilium axoneme. It localises to the flagellum axoneme. The protein localises to the cell projection. The protein resides in the kinocilium. Functionally, functions as part of axonemal radial spoke complexes that play an important part in the motility of sperm and cilia. Essential for both the radial spoke head assembly and the central pair microtubule stability in ependymal motile cilia. Required for motility of olfactory and neural cilia and for the structural integrity of ciliary axonemes in both 9+0 and 9+2 motile cilia. This chain is Radial spoke head protein 9 homolog (Rsph9), found in Mus musculus (Mouse).